The following is a 503-amino-acid chain: Nuclear respiratory factor 1 (503 aa).

The dimerization stretch occupies residues 1 to 78 (MEEHGVTQTE…AHLAAAGPVG (78 aa)). Positions 36-57 (SMLSADEDSPSSPEDTSYDDSD) are disordered. 5 positions are modified to phosphoserine; by CK2: Ser39, Ser44, Ser46, Ser47, and Ser52. The Nuclear localization signal motif lies at 88 to 116 (GKKRKRPHVFESNPSIRKRQQTRLLRKLR). The DNA-binding element occupies 109 to 305 (TRLLRKLRAT…SIAHLVPSQT (197 aa)). A Glycyl lysine isopeptide (Lys-Gly) (interchain with G-Cter in SUMO2) cross-link involves residue Lys139. The segment at 301–476 (VPSQTVVQTF…AQGNGPVQVA (176 aa)) is required for transcriptional activation.

This sequence belongs to the NRF1/Ewg family. Homodimer. Binds DNA as a dimer. Interacts with PPRC1. In terms of processing, phosphorylation enhances DNA binding. In terms of tissue distribution, widely expressed in embryonic, fetal, and adult tissues.

The protein resides in the nucleus. Functionally, transcription factor that activates the expression of the EIF2S1 (EIF2-alpha) gene. Links the transcriptional modulation of key metabolic genes to cellular growth and development. Implicated in the control of nuclear genes required for respiration, heme biosynthesis, and mitochondrial DNA transcription and replication. The sequence is that of Nuclear respiratory factor 1 (Nrf1) from Mus musculus (Mouse).